The following is a 476-amino-acid chain: Exoglucanase-6A (476 aa).

An N-terminal signal peptide occupies residues 1-16 (MAKFFLTAAFAAAALA). 2 cysteine pairs are disulfide-bonded: cysteine 33/cysteine 50 and cysteine 44/cysteine 60. The 28-residue stretch at 33–60 (CGGIGFNGPTCCQSGSTCVKQNDWYSQC) folds into the CBM1 domain. The disordered stretch occupies residues 67–94 (TTTSTTSTSSSSTTSRATSTTRTGGVTS). The O-linked (Man...) threonine glycan is linked to threonine 144. Serine 153 carries an O-linked (Man...) serine glycan. 2 residues coordinate substrate: tryptophan 163 and aspartate 165. Asparagine 167 carries an N-linked (GlcNAc...) asparagine glycan. Positions 200 to 222 (YDLPDRDCAAAASNGEWAIANNG) are substrate binding loop 1. Aspartate 252 acts as the Proton donor in catalysis. Substrate is bound by residues histidine 297, tryptophan 300, asparagine 336, tryptophan 397, lysine 425, and glutamate 429. Positions 423–461 (WVKPGGECDGTSDTTAARYDYHCGLEDALKPAPEAGQWF) are substrate binding loop 2. The Proton acceptor role is filled by aspartate 431.

The protein belongs to the glycosyl hydrolase 6 (cellulase A) family. In terms of assembly, monomer.

The catalysed reaction is Hydrolysis of (1-&gt;4)-beta-D-glucosidic linkages in cellulose and cellotetraose, releasing cellobiose from the non-reducing ends of the chains.. In terms of biological role, plays a central role in the recycling of plant biomass. The biological conversion of cellulose to glucose generally requires three types of hydrolytic enzymes: (1) Endoglucanases which cut internal beta-1,4-glucosidic bonds; (2) Exocellobiohydrolases that cut the disaccharide cellobiose from the non-reducing end of the cellulose polymer chain; (3) Beta-1,4-glucosidases which hydrolyze the cellobiose and other short cello-oligosaccharides to glucose. This Humicola insolens (Soft-rot fungus) protein is Exoglucanase-6A.